A 672-amino-acid chain; its full sequence is UvrABC system protein B (672 aa).

The region spanning 26-181 (AGLEDGLAYQ…ILQRLAELQY (156 aa)) is the Helicase ATP-binding domain. 39-46 (GVTGSGKT) serves as a coordination point for ATP. A Beta-hairpin motif is present at residues 92 to 115 (YYDYYQPEAYVPSSDTYIEKDASI). The Helicase C-terminal domain occupies 430–592 (QVDDLLSEIK…ITPKSIQKAV (163 aa)). The UVR domain maps to 631 to 666 (AKELRKLEEQMYHHARNLEFEEAAAVRDKIQHIRKG).

This sequence belongs to the UvrB family. In terms of assembly, forms a heterotetramer with UvrA during the search for lesions. Interacts with UvrC in an incision complex.

The protein localises to the cytoplasm. The UvrABC repair system catalyzes the recognition and processing of DNA lesions. A damage recognition complex composed of 2 UvrA and 2 UvrB subunits scans DNA for abnormalities. Upon binding of the UvrA(2)B(2) complex to a putative damaged site, the DNA wraps around one UvrB monomer. DNA wrap is dependent on ATP binding by UvrB and probably causes local melting of the DNA helix, facilitating insertion of UvrB beta-hairpin between the DNA strands. Then UvrB probes one DNA strand for the presence of a lesion. If a lesion is found the UvrA subunits dissociate and the UvrB-DNA preincision complex is formed. This complex is subsequently bound by UvrC and the second UvrB is released. If no lesion is found, the DNA wraps around the other UvrB subunit that will check the other stand for damage. The protein is UvrABC system protein B of Coxiella burnetii (strain CbuK_Q154) (Coxiella burnetii (strain Q154)).